Consider the following 1078-residue polypeptide: Transmembrane protein 132B (1078 aa).

The Extracellular segment spans residues Met-1–Ala-903. N-linked (GlcNAc...) asparagine glycans are attached at residues Asn-343, Asn-366, and Asn-381. A disordered region spans residues Arg-834–Leu-887. Over residues Glu-841 to Ser-852 the composition is skewed to polar residues. Residues Leu-904–Trp-924 form a helical membrane-spanning segment. Residues Lys-925 to Met-1078 are Cytoplasmic-facing.

It belongs to the TMEM132 family.

It localises to the membrane. The chain is Transmembrane protein 132B (TMEM132B) from Homo sapiens (Human).